The following is a 30-amino-acid chain: U1-poneritoxin-Ng3e (30 aa).

Expressed by the venom gland.

It localises to the secreted. Functionally, has activity against some Gram-positive bacteria and S.cerevisiae. Has a non-hemolytic activity. The protein is U1-poneritoxin-Ng3e of Neoponera goeldii (Ponerine ant).